The chain runs to 1076 residues: Atos homolog protein A (1076 aa).

A transactivation domain 1 (TAD1) region spans residues 24-32 (ALLITEGRT). Disordered stretches follow at residues 700–721 (ESMS…TQLN) and 739–765 (SDQL…QRRS). A compositionally biased stretch (basic and acidic residues) spans 739–754 (SDQLKNEQDKQEDPTN). The tract at residues 878 to 935 (LLGNFEESVLNYRFDPLGIVDGFTAEVGASGAFCPTHLTLPVEVSFYSVSDDNAPSPY) is required for macropage invasion. Positions 962–970 (FNPNKTVVK) are transactivation domain 2 (TAD2).

Belongs to the ATOS family.

The protein resides in the nucleus. Functionally, transcription regulator that syncronizes transcriptional and translational programs to promote macrophage invasion of tissues. In Homo sapiens (Human), this protein is Atos homolog protein A.